A 169-amino-acid polypeptide reads, in one-letter code: HTH-type transcriptional regulator PchR (169 aa).

The region spanning Tyr10–Ser153 is the HTH marR-type domain. Positions Asn64–Lys87 form a DNA-binding region, H-T-H motif.

In terms of assembly, homodimer.

Functionally, represses the expression of the yvmC-cypX operon, which is involved in pulcherriminic acid biosynthesis. Also negatively regulates yvmA, yvnB and its own expression. Positively regulates yisI expression. Acts by binding specifically to a 14-bp palindromic motif, the YvmB box, which is present in the promoter region of the target genes. The sequence is that of HTH-type transcriptional regulator PchR from Bacillus subtilis (strain 168).